The following is a 170-amino-acid chain: Cyclic pyranopterin monophosphate synthase (170 aa).

Residues 89–91 (LCH) and 125–126 (ME) contribute to the substrate site. Aspartate 140 is an active-site residue.

It belongs to the MoaC family. Homohexamer; trimer of dimers.

It catalyses the reaction (8S)-3',8-cyclo-7,8-dihydroguanosine 5'-triphosphate = cyclic pyranopterin phosphate + diphosphate. The protein operates within cofactor biosynthesis; molybdopterin biosynthesis. Catalyzes the conversion of (8S)-3',8-cyclo-7,8-dihydroguanosine 5'-triphosphate to cyclic pyranopterin monophosphate (cPMP). This Streptomyces coelicolor (strain ATCC BAA-471 / A3(2) / M145) protein is Cyclic pyranopterin monophosphate synthase.